The chain runs to 354 residues: Deoxyribonuclease-2-beta (354 aa).

A signal peptide spans 1–22 (MTAKPLRTVLSLLFFALSGVLG). N-linked (GlcNAc...) asparagine glycosylation is found at Asn-70, Asn-77, Asn-95, Asn-98, Asn-114, Asn-129, Asn-208, Asn-271, and Asn-319.

The protein belongs to the DNase II family. As to expression, highly expressed in the eye lens. Detected in liver, but not in the other tissues tested.

The protein localises to the lysosome. The catalysed reaction is Endonucleolytic cleavage to nucleoside 3'-phosphates and 3'-phosphooligonucleotide end-products.. Its function is as follows. Hydrolyzes DNA under acidic conditions. Does not require divalent cations for activity. Participates in the degradation of nuclear DNA during lens cell differentiation. This is Deoxyribonuclease-2-beta (Dnase2b) from Mus musculus (Mouse).